Consider the following 373-residue polypeptide: Putative ribosome biogenesis protein C8F11.04 (373 aa).

The interval 265–373 (RKVVTKETAS…VKAGKNKVKH (109 aa)) is disordered. Over residues 292 to 320 (KVEVAKESKDSKQQNVSDKKQVTVKEVPK) the composition is skewed to basic and acidic residues. Residues 347 to 359 (KVSQSSLKANGTT) are compositionally biased toward polar residues. Positions 362 to 373 (KKVKAGKNKVKH) are enriched in basic residues.

Belongs to the universal ribosomal protein uL1 family. Highly divergent. In terms of assembly, component of the 90S pre-ribosomes.

It localises to the nucleus. The protein resides in the nucleolus. In terms of biological role, involved in rRNA-processing and ribosome biosynthesis. The protein is Putative ribosome biogenesis protein C8F11.04 of Schizosaccharomyces pombe (strain 972 / ATCC 24843) (Fission yeast).